Consider the following 850-residue polypeptide: MLKLPKGLKKKKKKSKKDQELFTEEELEQYKRDLKAKQEAAATKSDAGESDGASSDVEAHHEPVAFNSGLGSGSSSSILNAQQQLSDQNQGAAGGDEEWAKFKALTSGVDSILHKTQDELDRIKKESFYQRLPSAAEKKKQKEEEAARLEAEQQEREKQRLGQIEAQRDKLAEAVVQLSESEEEAGDYEADDIFATDYIEAITSGELQLAVVPDSPVLAEDGPDPFDTAYAEKVIVGADRAKGNKKLVSLGAAVEVLSGRVDREHAVALANPKRKLRKGIQNLLLSESIELADSEAELLAATSNAEPQHNLLDDLDEELSESSVPIDLSVSLHLHLIKHKQPVEEEEELEQKGRENQLLNPDLSEFDSLKDEEDDEFAELAAESLTKKEEVTVVSQVVLPVAQLPTEAFEAGSWAEFEEQSGQEPGKPKRPPPPVRPPTGPHIVPGAIYVSEDEEENPEDDPFNTNYAEQVIKKTTVLEEDDDFDPRAEEHATEPPFLAAPQRDLLAGSATDLSQVVPAPLAPTLSVDQEAEDFDPFDTSAVSALVQPKSTELRFLERELLNYSGLDGVTLKHSLSDQDFDPRADQKEPAAPQVKLEQKETDFDTAQRKSSLSLNIQAKSVGFLVPASDLLGAGNELGASKKPLTPYYAPSDNRLQEREREAEDVDPFDTSHVPEAKLSDIELKHIEKDLISVPANLRHSLSDPDFDPRAPPTPVPAEVLLAVEENINIKVLTPAQDRKKLTNSGGSGKSEEDIDPFDTSIAANLQPGQTELKLLENELLPETKTLVTDVLDVQSDAQELGLGDKVLTPSTHSRPSLPAQDIDPFDTSIAENLAPGEAEIKLLESELIER.

Basic residues predominate over residues 1 to 16 (MLKLPKGLKKKKKKSK). Disordered regions lie at residues 1–95 (MLKL…AAGG) and 125–164 (KESF…LGQI). The interval 26–290 (ELEQYKRDLK…QNLLLSESIE (265 aa)) is interaction with Syt. Residues 28–38 (EQYKRDLKAKQ) are compositionally biased toward basic and acidic residues. Over residues 78 to 91 (ILNAQQQLSDQNQG) the composition is skewed to polar residues. Residues 136-164 (AEKKKQKEEEAARLEAEQQEREKQRLGQI) are compositionally biased toward basic and acidic residues. Positions 224 to 226 (DPF) match the DPF 1 motif. Disordered stretches follow at residues 345–375 (EEEE…EEDD) and 412–498 (GSWA…PPFL). Positions 431–440 (PPPPVRPPTG) are enriched in pro residues. Residues 451-462 (SEDEEENPEDDP) show a composition bias toward acidic residues. 2 short sequence motifs (DPF) span residues 461–463 (DPF) and 535–537 (DPF). Disordered stretches follow at residues 573-610 (HSLS…QRKS), 634-673 (GNEL…TSHV), 738-760 (RKKL…FDTS), and 800-825 (LGLG…IDPF). 2 stretches are compositionally biased toward basic and acidic residues: residues 574-588 (SLSD…DQKE) and 596-607 (LEQKETDFDTAQ). 3 consecutive short sequence motifs (DPF) follow at residues 666-668 (DPF), 755-757 (DPF), and 823-825 (DPF).

As to quaternary structure, interacts with the second C2 domain of Syt.

It localises to the cytoplasm. The protein localises to the synapse. It is found in the cytoplasmic vesicle. Its subcellular location is the secretory vesicle. The protein resides in the synaptic vesicle. In terms of biological role, adapter protein involved in endocytic recycling of synaptic vesicles membranes. May act by mediating the retrieval of synaptotagmin protein Syt from the plasma membrane, thereby facilitating the internalization of multiple synaptic vesicles from the plasma membrane. The chain is Protein stoned-A (stnA) from Drosophila melanogaster (Fruit fly).